The chain runs to 426 residues: Glutamate-1-semialdehyde 2,1-aminomutase (426 aa).

Lys-265 carries the post-translational modification N6-(pyridoxal phosphate)lysine.

Belongs to the class-III pyridoxal-phosphate-dependent aminotransferase family. HemL subfamily. As to quaternary structure, homodimer. The cofactor is pyridoxal 5'-phosphate.

Its subcellular location is the cytoplasm. It carries out the reaction (S)-4-amino-5-oxopentanoate = 5-aminolevulinate. Its pathway is porphyrin-containing compound metabolism; protoporphyrin-IX biosynthesis; 5-aminolevulinate from L-glutamyl-tRNA(Glu): step 2/2. The sequence is that of Glutamate-1-semialdehyde 2,1-aminomutase from Escherichia coli O81 (strain ED1a).